A 258-amino-acid chain; its full sequence is Translocon-associated protein subunit alpha (258 aa).

The N-terminal stretch at Met1–Cys24 is a signal peptide. Over Gln25 to Ser190 the chain is Lumenal. Residues Asn57, Asn119, and Asn127 are each glycosylated (N-linked (GlcNAc...) asparagine). A helical membrane pass occupies residues Val191–Tyr209. The Cytoplasmic segment spans residues Ser210–Asn258.

The protein belongs to the TRAP-alpha family. In terms of assembly, heterotetramer of TRAP-alpha, TRAP-beta, TRAP-delta and TRAP-gamma. In terms of processing, phosphorylated in its cytoplasmic tail.

It is found in the endoplasmic reticulum membrane. TRAP proteins are part of a complex whose function is to bind calcium to the ER membrane and thereby regulate the retention of ER resident proteins. May be involved in the recycling of the translocation apparatus after completion of the translocation process or may function as a membrane-bound chaperone facilitating folding of translocated proteins. The polypeptide is Translocon-associated protein subunit alpha (Arabidopsis thaliana (Mouse-ear cress)).